The chain runs to 197 residues: Probable molybdenum cofactor guanylyltransferase (197 aa).

Residues 9–11 (LAG), K21, D65, and D94 contribute to the GTP site. D94 contacts Mg(2+).

It belongs to the MobA family. It depends on Mg(2+) as a cofactor.

Its subcellular location is the cytoplasm. The catalysed reaction is Mo-molybdopterin + GTP + H(+) = Mo-molybdopterin guanine dinucleotide + diphosphate. In terms of biological role, transfers a GMP moiety from GTP to Mo-molybdopterin (Mo-MPT) cofactor (Moco or molybdenum cofactor) to form Mo-molybdopterin guanine dinucleotide (Mo-MGD) cofactor. This is Probable molybdenum cofactor guanylyltransferase from Carboxydothermus hydrogenoformans (strain ATCC BAA-161 / DSM 6008 / Z-2901).